A 1381-amino-acid polypeptide reads, in one-letter code: DNA-directed RNA polymerase subunit beta'' (1381 aa).

Zn(2+) contacts are provided by C224, C296, C303, and C306.

The protein belongs to the RNA polymerase beta' chain family. RpoC2 subfamily. In plastids the minimal PEP RNA polymerase catalytic core is composed of four subunits: alpha, beta, beta', and beta''. When a (nuclear-encoded) sigma factor is associated with the core the holoenzyme is formed, which can initiate transcription. Zn(2+) is required as a cofactor.

The protein resides in the plastid. Its subcellular location is the chloroplast. The catalysed reaction is RNA(n) + a ribonucleoside 5'-triphosphate = RNA(n+1) + diphosphate. Functionally, DNA-dependent RNA polymerase catalyzes the transcription of DNA into RNA using the four ribonucleoside triphosphates as substrates. The polypeptide is DNA-directed RNA polymerase subunit beta'' (Drimys granadensis).